The primary structure comprises 231 residues: Probable methylthioribulose-1-phosphate dehydratase (231 aa).

Residue Cys-82 participates in substrate binding. Residues His-100 and His-102 each coordinate Zn(2+). Glu-123 (proton donor/acceptor) is an active-site residue. His-181 provides a ligand contact to Zn(2+).

Belongs to the aldolase class II family. MtnB subfamily. Requires Zn(2+) as cofactor.

It is found in the cytoplasm. It catalyses the reaction 5-(methylsulfanyl)-D-ribulose 1-phosphate = 5-methylsulfanyl-2,3-dioxopentyl phosphate + H2O. It participates in amino-acid biosynthesis; L-methionine biosynthesis via salvage pathway; L-methionine from S-methyl-5-thio-alpha-D-ribose 1-phosphate: step 2/6. Functionally, catalyzes the dehydration of methylthioribulose-1-phosphate (MTRu-1-P) into 2,3-diketo-5-methylthiopentyl-1-phosphate (DK-MTP-1-P). The polypeptide is Probable methylthioribulose-1-phosphate dehydratase (Dictyostelium discoideum (Social amoeba)).